The following is a 301-amino-acid chain: Amine sulfotransferase (301 aa).

46–51 contributes to the 3'-phosphoadenylyl sulfate binding site; it reads KSGTVW. H101 acts as the Proton acceptor in catalysis. 3'-phosphoadenylyl sulfate contacts are provided by residues R123, S131, Y186, 220–225, and 252–254; these read ATFENM and RKG.

Belongs to the sulfotransferase 1 family. Expressed in male liver.

It is found in the cytoplasm. It carries out the reaction a primary amine + 3'-phosphoadenylyl sulfate = a sulfamate + adenosine 3',5'-bisphosphate + 2 H(+). Functionally, sulfotransferase that utilizes 3'-phospho-5'-adenylyl sulfate (PAPS) as sulfonate donor to catalyze the N-sulfonation of amines (PTHP, aniline, 4-chloroaniline, 2-naphthylamine). The sequence is that of Amine sulfotransferase (SULT3A1) from Oryctolagus cuniculus (Rabbit).